A 249-amino-acid chain; its full sequence is MRVVKIGGSVISMLENLWRENGISEILGNSVIVHGGSRHVDELSRKMGVKIEKLTSPSGVTFRRTTKEVLKVYVAAMIRANKEIVEFLRNQGINAIGLTGLDRELIIGERKKLIKAVINGRVVAIRDDYSGVIKKVNTQILREYLKIGTPVIASIAYDPIENTPLNVDGDKVAYHVALAMDAKELYFLSDTAFMAGGKVVSELPADEIEKYLIFAKGGMKKKLLMAKEAINSGIKNVVIEGLNGRTVIY.

Residues Arg63 and Asn166 each contribute to the substrate site.

This sequence belongs to the acetylglutamate kinase family. LysZ subfamily.

The protein resides in the cytoplasm. It carries out the reaction [amino-group carrier protein]-C-terminal-N-(1,4-dicarboxybutan-1-yl)-L-glutamine + ATP = [amino-group carrier protein]-C-terminal-N-(1-carboxy-5-phosphooxy-5-oxopentan-1-yl)-L-glutamine + ADP. The enzyme catalyses [amino-group carrier protein]-C-terminal-gamma-(L-glutamyl)-L-glutamate + ATP = [amino-group carrier protein]-C-terminal-gamma-(5-phospho-L-glutamyl)-L-glutamate + ADP. It functions in the pathway amino-acid biosynthesis; L-lysine biosynthesis via AAA pathway; L-lysine from L-alpha-aminoadipate (Thermus route): step 2/5. It participates in amino-acid biosynthesis; L-arginine biosynthesis. Involved in both the arginine and lysine biosynthetic pathways. Phosphorylates the LysW-bound precursors glutamate (for arginine biosynthesis), respectively alpha-aminoadipate (for lysine biosynthesis). The chain is Putative [LysW]-aminoadipate/[LysW]-glutamate kinase from Pyrococcus furiosus (strain ATCC 43587 / DSM 3638 / JCM 8422 / Vc1).